The chain runs to 234 residues: UPF0173 metal-dependent hydrolase R01310 (234 aa).

It belongs to the UPF0173 family.

In Rhizobium meliloti (strain 1021) (Ensifer meliloti), this protein is UPF0173 metal-dependent hydrolase R01310.